The chain runs to 180 residues: ATP-dependent protease subunit HslV (180 aa).

T6 is a catalytic residue. Positions 164, 167, and 170 each coordinate Na(+).

It belongs to the peptidase T1B family. HslV subfamily. A double ring-shaped homohexamer of HslV is capped on each side by a ring-shaped HslU homohexamer. The assembly of the HslU/HslV complex is dependent on binding of ATP.

The protein resides in the cytoplasm. The enzyme catalyses ATP-dependent cleavage of peptide bonds with broad specificity.. Its activity is regulated as follows. Allosterically activated by HslU binding. Protease subunit of a proteasome-like degradation complex believed to be a general protein degrading machinery. The protein is ATP-dependent protease subunit HslV of Borrelia recurrentis (strain A1).